Reading from the N-terminus, the 556-residue chain is Formate--tetrahydrofolate ligase (556 aa).

65–72 (TPAGEGKS) lines the ATP pocket.

Belongs to the formate--tetrahydrofolate ligase family.

The enzyme catalyses (6S)-5,6,7,8-tetrahydrofolate + formate + ATP = (6R)-10-formyltetrahydrofolate + ADP + phosphate. The protein operates within one-carbon metabolism; tetrahydrofolate interconversion. This Streptococcus pneumoniae (strain Hungary19A-6) protein is Formate--tetrahydrofolate ligase.